A 342-amino-acid polypeptide reads, in one-letter code: Ketoreductase nvfG (342 aa).

Belongs to the NAD(P)-dependent epimerase/dehydratase family. Dihydroflavonol-4-reductase subfamily.

Its pathway is secondary metabolite biosynthesis; terpenoid biosynthesis. Ketoreductase; part of the gene cluster that mediates the biosynthesis of novofumigatonin, a heavily oxygenated meroterpenoid containing a unique orthoester moiety. The first step of the pathway is the synthesis of 3,5-dimethylorsellinic acid (DMOA) by the polyketide synthase nvfA via condensation of one acetyl-CoA starter unit with 3 malonyl-CoA units and 2 methylations. DMOA is then converted to farnesyl-DMOA by the farnesyltransferase nvfB. Epoxydation by FAD-dependent monooxygenase nvfK, followed by a protonation-initiated cyclization catalyzed by the terpene cyclase nvfL leads to the production of asnavolin H. The short chain dehydrogenase nvfC then as a 3-OH dehydrogenase of asnovolin H to yield chemesin D. There are two branches to synthesize asnovolin A from chemesin D. In one branch, chemesin D undergoes Baeyer-Villiger oxidation by nvfH, methylation by nvfJ, and enoyl reduction by the nvfM D enoylreductase that reduces the double bond between C-5'and C-6', to form respectively asnovolin I, asnovolin K, and asnovolin A. In the other branch, the methylation precedes the Baeyer-Villiger oxidation and the enoyl reduction to yield asnovolin A via the asnovolin J intermediate. Asnovolin A is further converted to fumigatonoid A by the Fe(II)/2-oxoglutarate-dependent dioxygenase nvfI that catalyzes an endoperoxidation reaction. The alpha/beta hydrolase nvfD then acts as an epimerase that converts fumigatonoid A to its C-5' epimer, which then undergoes spontaneous or nvfD-catalyzed lactonization. The following step utilizes the ketoreductase nvfG to produce fumigatonoid B. The dioxygenase nvfE further converts fumigatonoid B into fumigatonoid C. Finally the Fe(II)/2-oxoglutarate-dependent dioxygenase nvfF catalyzes two rounds of oxidation to transform fumigatonoid C into the end product, novofumigatonin A. The sequence is that of Ketoreductase nvfG from Aspergillus novofumigatus (strain IBT 16806).